The following is a 102-amino-acid chain: NADH-quinone oxidoreductase subunit K (102 aa).

A run of 3 helical transmembrane segments spans residues 5-25, 30-50, and 62-82; these read LAHY…GIFV, IIVI…NLVA, and IFAM…LAIL.

Belongs to the complex I subunit 4L family. As to quaternary structure, NDH-1 is composed of 14 different subunits. Subunits NuoA, H, J, K, L, M, N constitute the membrane sector of the complex.

The protein resides in the cell inner membrane. It catalyses the reaction a quinone + NADH + 5 H(+)(in) = a quinol + NAD(+) + 4 H(+)(out). Its function is as follows. NDH-1 shuttles electrons from NADH, via FMN and iron-sulfur (Fe-S) centers, to quinones in the respiratory chain. The immediate electron acceptor for the enzyme in this species is believed to be ubiquinone. Couples the redox reaction to proton translocation (for every two electrons transferred, four hydrogen ions are translocated across the cytoplasmic membrane), and thus conserves the redox energy in a proton gradient. In Phenylobacterium zucineum (strain HLK1), this protein is NADH-quinone oxidoreductase subunit K.